The chain runs to 1011 residues: Rap guanine nucleotide exchange factor 4 (1011 aa).

The DEP domain maps to 216–291 (SRAPHMIRDR…DKYLFYRFLD (76 aa)). 3',5'-cyclic AMP-binding positions include 422–425 (GKLA) and 432–433 (RA). An N-terminal Ras-GEF domain is found at 496-634 (QKYTVMSGTP…ELEKIVKQIS (139 aa)). In terms of domain architecture, Ras-GEF spans 772–1009 (SSKDLAYQMT…SQMSHRLEPR (238 aa)).

Interacts with RAP1B, RIMS1 and RIMS2. Probably part of a complex with RIMS2 and GTP-activated RAB3A. Expressed in cerebellum, pituitary, adrenal gland and liver.

It is found in the cytoplasm. The protein resides in the membrane. In terms of biological role, guanine nucleotide exchange factor (GEF) for RAP1A, RAP1B and RAP2A small GTPases that is activated by binding cAMP. Seems not to activate RAB3A. Involved in cAMP-dependent, PKA-independent exocytosis through interaction with RIMS2. The polypeptide is Rap guanine nucleotide exchange factor 4 (Rapgef4) (Mus musculus (Mouse)).